We begin with the raw amino-acid sequence, 472 residues long: Cannabinoid receptor 1 (472 aa).

The Extracellular portion of the chain corresponds to 1-116 (MKSILDGLAD…CFMILNPSQQ (116 aa)). The required for mitochondrial localization stretch occupies residues 2–23 (KSILDGLADTTFRTITTDLLYV). Residues Asn77 and Asn83 are each glycosylated (N-linked (GlcNAc...) asparagine). The helical transmembrane segment at 117–142 (LAIAVLSLTLGTFTVLENLLVLCVIL) threads the bilayer. Residues 143–154 (HSRSLRCRPSYH) lie on the Cytoplasmic side of the membrane. Residues 155–175 (FIGSLAVADLLGSVIFVYSFV) form a helical membrane-spanning segment. Residues 176 to 187 (DFHVFHRKDSPN) are Extracellular-facing. A helical transmembrane segment spans residues 188-212 (VFLFKLGGVTASFTASVGSLFLTAI). Topologically, residues 213 to 232 (DRYISIHRPLAYKKIVTRPK) are cytoplasmic. Residues 233-255 (AVVAFCLMWTIAIVIAVLPLLGW) traverse the membrane as a helical segment. The Extracellular segment spans residues 256 to 273 (NCKKLQSVCSDIFPLIDE). The chain crosses the membrane as a helical span at residues 274 to 299 (TYLMFWIGVTSVLLLFIVYAYMYILW). The Cytoplasmic segment spans residues 300–344 (KAHIHAVRMIQRGTQKSIIIHTSEDGKVQVTRPDQARMDIRLAKT). The helical transmembrane segment at 345-365 (LVLILVVLIICWGPLLAIMVY) threads the bilayer. Residues 366-377 (DVFGKMNKLIKT) lie on the Extracellular side of the membrane. A helical membrane pass occupies residues 378–399 (VFAFCSMLCLLNSTVNPIIYAL). The Cytoplasmic portion of the chain corresponds to 400–472 (RSKDLRHAFR…VSTNTSAKAL (73 aa)). Cys415 carries the S-palmitoyl cysteine lipid modification. Residues Ser425 and Ser429 each carry the phosphoserine modification.

It belongs to the G-protein coupled receptor 1 family. Interacts (via C-terminus) with CNRIP1; this interaction attenuates constitutive, but not agonist-dependent, inhibition of voltage-gated Ca(2+) channels in neurons. Associates with G protein alpha subunits, including G(i) alpha-1/GNAI1, G(i) alpha-3/GNAI3 and G(o)-alpha/GNAO1; palmitoylation is important for interaction with GNAI3 and GNAO1. Post-translationally, palmitoylation at Cys-415 is important for recruitment at plasma membrane and lipid rafts and association with G protein alpha subunits. As to expression, expressed in cerebral arterial muscle cells and cerebral cortex (at protein level).

It localises to the cell membrane. It is found in the membrane raft. The protein localises to the mitochondrion outer membrane. Its subcellular location is the cell projection. The protein resides in the axon. It localises to the presynapse. Its activity is regulated as follows. Hemopressin, a peptide derived from hemoglobin subunit alpha (HBA1 and/or HBA2), acts as an antagonist peptide: hemopressin-binding efficiently blocks cannabinoid receptor CNR1 and subsequent signaling. G-protein coupled receptor for endogenous cannabinoids (eCBs), including N-arachidonoylethanolamide (also called anandamide or AEA) and 2-arachidonoylglycerol (2-AG), as well as phytocannabinoids, such as delta(9)-tetrahydrocannabinol (THC). Mediates many cannabinoid-induced effects, acting, among others, on food intake, memory loss, gastrointestinal motility, catalepsy, ambulatory activity, anxiety, chronic pain. Signaling typically involves reduction in cyclic AMP. In the hypothalamus, may have a dual effect on mitochondrial respiration depending upon the agonist dose and possibly upon the cell type. Increases respiration at low doses, while decreases respiration at high doses. At high doses, CNR1 signal transduction involves G-protein alpha-i protein activation and subsequent inhibition of mitochondrial soluble adenylate cyclase, decrease in cyclic AMP concentration, inhibition of protein kinase A (PKA)-dependent phosphorylation of specific subunits of the mitochondrial electron transport system, including NDUFS2. In the hypothalamus, inhibits leptin-induced reactive oxygen species (ROS) formation and mediates cannabinoid-induced increase in SREBF1 and FASN gene expression. In response to cannabinoids, drives the release of orexigenic beta-endorphin, not that of melanocyte-stimulating hormone alpha/alpha-MSH, from hypothalamic POMC neurons, hence promoting food intake. In the hippocampus, regulates cellular respiration and energy production in response to cannabinoids. Involved in cannabinoid-dependent depolarization-induced suppression of inhibition (DSI), a process in which depolarization of CA1 postsynaptic pyramidal neurons mobilizes eCBs, which retrogradely activate presynaptic CB1 receptors, transiently decreasing GABAergic inhibitory neurotransmission. Also reduces excitatory synaptic transmission. In superior cervical ganglions and cerebral vascular smooth muscle cells, inhibits voltage-gated Ca(2+) channels in a constitutive, as well as agonist-dependent manner. In cerebral vascular smooth muscle cells, inhibition of voltage-gated Ca(2+) channels leads to vasodilation and decrease in vascular tone. Induces leptin production in adipocytes and reduces LRP2-mediated leptin clearance in the kidney, hence participating in hyperleptinemia. In adipose tissue, CNR1 signaling leads to increased expression of SREBF1, ACACA and FASN genes. In the liver, activation by endocannabinoids leads to increased de novo lipogenesis and reduced fatty acid catabolism, associated with increased expression of SREBF1/SREBP-1, GCK, ACACA, ACACB and FASN genes. May also affect de novo cholesterol synthesis and HDL-cholesteryl ether uptake. Peripherally modulates energy metabolism. In high carbohydrate diet-induced obesity, may decrease the expression of mitochondrial dihydrolipoyl dehydrogenase/DLD in striated muscles, as well as that of selected glucose/ pyruvate metabolic enzymes, hence affecting energy expenditure through mitochondrial metabolism. In response to cannabinoid anandamide, elicits a pro-inflammatory response in macrophages, which involves NLRP3 inflammasome activation and IL1B and IL18 secretion. In macrophages infiltrating pancreatic islets, this process may participate in the progression of type-2 diabetes and associated loss of pancreatic beta-cells. This is Cannabinoid receptor 1 (CNR1) from Felis catus (Cat).